The chain runs to 277 residues: Myelin proteolipid protein (277 aa).

The Cytoplasmic segment spans residues 2-10 (GLLECCARC). 3 S-palmitoyl cysteine lipidation sites follow: Cys-6, Cys-7, and Cys-10. A helical membrane pass occupies residues 11–36 (LIGAPFASLVATGLCFFGVALFCGCG). The Extracellular portion of the chain corresponds to 37 to 59 (HEALTGTEQLIETYFSKNYQDYE). Residues 60 to 88 (YLIDVIHAFQYVIYGTASFFFLYGALLLA) traverse the membrane as a helical segment. Topologically, residues 89–151 (EGFYTTGAVR…LGKWLGHPDK (63 aa)) are cytoplasmic. S-palmitoyl cysteine attachment occurs at residues Cys-109, Cys-139, and Cys-141. A helical transmembrane segment spans residues 152 to 178 (FVGITYVLTIVWLLAFACSAVPVYIYF). Residues 179-238 (NTWTTCQSIAFPTKTTASIGTLCADARMYGVLPWNAFPGKVCGSNLLSICKTSEFQMTFH) are Extracellular-facing. Disulfide bonds link Cys-184–Cys-228 and Cys-201–Cys-220. The O-palmitoyl threonine moiety is linked to residue Thr-199. The chain crosses the membrane as a helical span at residues 239–268 (LFIAAFVGAAATLVSLLTFMIAATYNFAVL). Residues 269–277 (KLMGRGTKF) are Cytoplasmic-facing.

The protein belongs to the myelin proteolipid protein family.

It localises to the cell membrane. Its function is as follows. This is the major myelin protein from the central nervous system. It plays an important role in the formation or maintenance of the multilamellar structure of myelin. The protein is Myelin proteolipid protein (PLP1) of Gallus gallus (Chicken).